Here is a 498-residue protein sequence, read N- to C-terminus: Protein flp (498 aa).

4 helical membrane passes run leucine 6–threonine 26, phenylalanine 389–tyrosine 409, leucine 433–leucine 453, and leucine 471–leucine 491.

The protein resides in the cell membrane. Its function is as follows. Its precise function is unknown. Has no penicillin-binding activity and is not involved in methicillin resistance. This is Protein flp (flp) from Staphylococcus aureus (strain MW2).